The sequence spans 172 residues: MSYNCCSRNFSSCSHGGYLHYPGSSCGSSYPSNLVYSTDLCSPSTCQLGSSLYRGCQETCWRPNSCQTLCVESSPCHTSCYYPRTHMLCNSCLTMHVGSRGFGSNSCCSLSCGSRSCSSLGCGSNGFRYLNYRIHTSPSQSYRSRFCHPIYFPPRRWFHSSCYQPFCRSGFY.

5 tandem repeats follow at residues 46 to 55 (CQLGSSLYRG), 56 to 65 (CQETCWRPNS), 66 to 75 (CQTLCVESSP), 76 to 85 (CHTSCYYPRT), and 92 to 101 (CLTMHVGSRG). A 5 X 10 AA approximate repeats region spans residues 46 to 101 (CQLGSSLYRGCQETCWRPNSCQTLCVESSPCHTSCYYPRTHMLCNSCLTMHVGSRG).

Belongs to the PMG family. As to quaternary structure, interacts with hair keratins.

In terms of biological role, in the hair cortex, hair keratin intermediate filaments are embedded in an interfilamentous matrix, consisting of hair keratin-associated proteins (KRTAP), which are essential for the formation of a rigid and resistant hair shaft through their extensive disulfide bond cross-linking with abundant cysteine residues of hair keratins. The matrix proteins include the high-sulfur and high-glycine-tyrosine keratins. In Homo sapiens (Human), this protein is Keratin-associated protein 13-3 (KRTAP13-3).